A 447-amino-acid chain; its full sequence is Argininosuccinate synthase (447 aa).

ATP contacts are provided by residues A17–S25 and A43. Y99 serves as a coordination point for L-citrulline. Residues G129 and T131 each contribute to the ATP site. The L-aspartate site is built by T131, N135, and D136. N135 provides a ligand contact to L-citrulline. D136 contributes to the ATP binding site. L-citrulline-binding residues include R139 and S192. D194 contacts ATP. L-citrulline contacts are provided by T201, E203, and E280.

The protein belongs to the argininosuccinate synthase family. Type 2 subfamily. As to quaternary structure, homotetramer.

Its subcellular location is the cytoplasm. The enzyme catalyses L-citrulline + L-aspartate + ATP = 2-(N(omega)-L-arginino)succinate + AMP + diphosphate + H(+). It functions in the pathway amino-acid biosynthesis; L-arginine biosynthesis; L-arginine from L-ornithine and carbamoyl phosphate: step 2/3. The protein is Argininosuccinate synthase of Janthinobacterium sp. (strain Marseille) (Minibacterium massiliensis).